The chain runs to 187 residues: GTP cyclohydrolase 1 (187 aa).

The Zn(2+) site is built by C81, H84, and C152.

Belongs to the GTP cyclohydrolase I family. As to quaternary structure, homomer.

The catalysed reaction is GTP + H2O = 7,8-dihydroneopterin 3'-triphosphate + formate + H(+). The protein operates within cofactor biosynthesis; 7,8-dihydroneopterin triphosphate biosynthesis; 7,8-dihydroneopterin triphosphate from GTP: step 1/1. This chain is GTP cyclohydrolase 1, found in Pyrobaculum neutrophilum (strain DSM 2338 / JCM 9278 / NBRC 100436 / V24Sta) (Thermoproteus neutrophilus).